A 284-amino-acid polypeptide reads, in one-letter code: Thymidylate synthase (284 aa).

Arginine 34 lines the dUMP pocket. Position 64 (histidine 64) interacts with (6R)-5,10-methylene-5,6,7,8-tetrahydrofolate. 139 to 140 is a dUMP binding site; that stretch reads RR. Residue cysteine 159 is the Nucleophile of the active site. DUMP is bound by residues 186-189, asparagine 197, and 227-229; these read RSAD and HIY. Aspartate 189 is a (6R)-5,10-methylene-5,6,7,8-tetrahydrofolate binding site. Residue alanine 283 coordinates (6R)-5,10-methylene-5,6,7,8-tetrahydrofolate.

This sequence belongs to the thymidylate synthase family. Bacterial-type ThyA subfamily. Homodimer.

The protein resides in the cytoplasm. The catalysed reaction is dUMP + (6R)-5,10-methylene-5,6,7,8-tetrahydrofolate = 7,8-dihydrofolate + dTMP. It functions in the pathway pyrimidine metabolism; dTTP biosynthesis. In terms of biological role, catalyzes the reductive methylation of 2'-deoxyuridine-5'-monophosphate (dUMP) to 2'-deoxythymidine-5'-monophosphate (dTMP) while utilizing 5,10-methylenetetrahydrofolate (mTHF) as the methyl donor and reductant in the reaction, yielding dihydrofolate (DHF) as a by-product. This enzymatic reaction provides an intracellular de novo source of dTMP, an essential precursor for DNA biosynthesis. The protein is Thymidylate synthase of Polaromonas sp. (strain JS666 / ATCC BAA-500).